The primary structure comprises 1104 residues: Receptor-mediated endocytosis protein 6 (1104 aa).

A Ras-GAP domain is found at 156–389 (LKIAQVVCYL…EMMDSLLVEN (234 aa)). A disordered region spans residues 663–682 (SSLAKQPSGMVSSASAQNIP). The 139-residue stretch at 966–1104 (QKKDKLLQSV…SAVEYIKTIL (139 aa)) folds into the VPS9 domain.

Belongs to the GAPVD1 family. In terms of assembly, interacts with GDP-bound rab-5. Interacts with alpha-adaptin.

It is found in the membrane. Its subcellular location is the cytoplasmic vesicle. It localises to the clathrin-coated vesicle. Acts both as a GTPase-activating protein (GAP) and a guanine nucleotide exchange factor (GEF), and participates in endocytosis. Acts by regulating the activation of rab-5 by exchanging bound GDP for free GTP at clathrin coated pits. The sequence is that of Receptor-mediated endocytosis protein 6 (rme-6) from Caenorhabditis briggsae.